We begin with the raw amino-acid sequence, 381 residues long: Queuine tRNA-ribosyltransferase (381 aa).

D90 (proton acceptor) is an active-site residue. Substrate is bound by residues 90–94 (DSGGF), D144, Q193, and G221. An RNA binding region spans residues 252–258 (GVGTPEN). The active-site Nucleophile is D271. An RNA binding; important for wobble base 34 recognition region spans residues 276–280 (TRNAR). Zn(2+) contacts are provided by C309, C311, C314, and H340.

The protein belongs to the queuine tRNA-ribosyltransferase family. Homodimer. Within each dimer, one monomer is responsible for RNA recognition and catalysis, while the other monomer binds to the replacement base PreQ1. The cofactor is Zn(2+).

It catalyses the reaction 7-aminomethyl-7-carbaguanine + guanosine(34) in tRNA = 7-aminomethyl-7-carbaguanosine(34) in tRNA + guanine. The protein operates within tRNA modification; tRNA-queuosine biosynthesis. Functionally, catalyzes the base-exchange of a guanine (G) residue with the queuine precursor 7-aminomethyl-7-deazaguanine (PreQ1) at position 34 (anticodon wobble position) in tRNAs with GU(N) anticodons (tRNA-Asp, -Asn, -His and -Tyr). Catalysis occurs through a double-displacement mechanism. The nucleophile active site attacks the C1' of nucleotide 34 to detach the guanine base from the RNA, forming a covalent enzyme-RNA intermediate. The proton acceptor active site deprotonates the incoming PreQ1, allowing a nucleophilic attack on the C1' of the ribose to form the product. After dissociation, two additional enzymatic reactions on the tRNA convert PreQ1 to queuine (Q), resulting in the hypermodified nucleoside queuosine (7-(((4,5-cis-dihydroxy-2-cyclopenten-1-yl)amino)methyl)-7-deazaguanosine). This Helicobacter hepaticus (strain ATCC 51449 / 3B1) protein is Queuine tRNA-ribosyltransferase.